A 567-amino-acid chain; its full sequence is Polyadenylate-binding protein-interacting protein 7 (567 aa).

The interval 1-22 (MSLTKKASEPKLSGTSIKPTTL) is disordered. The span at 13-22 (SGTSIKPTTL) shows a compositional bias: polar residues. A PAM2-like motif is present at residues 21–31 (TLNPHAAEFVP). Residues 215–259 (DMEVNPVDFLASQFPGFAAESLAEVYFANGCDLQLTIEMLTQLEL) form the CUE domain. Residues 355–387 (RNDSADSSIGSSRNSGAYKSGRGRSIYSDKLQS) form a disordered region. Over residues 359–371 (ADSSIGSSRNSGA) the composition is skewed to polar residues. Residues 485 to 567 (IDLHGLHVSE…QAGLLRVIIY (83 aa)) enclose the Smr domain.

In terms of assembly, interacts with MPC and PAB2. Expressed in cauline leaves, stems, rosette leaves, immature siliques and primary inflorescences.

The polypeptide is Polyadenylate-binding protein-interacting protein 7 (CID7) (Arabidopsis thaliana (Mouse-ear cress)).